Here is a 70-residue protein sequence, read N- to C-terminus: UPF0270 protein VV1_1320 (70 aa).

The protein belongs to the UPF0270 family.

The polypeptide is UPF0270 protein VV1_1320 (Vibrio vulnificus (strain CMCP6)).